Here is a 257-residue protein sequence, read N- to C-terminus: Probable 6-phosphogluconolactonase (257 aa).

It belongs to the glucosamine/galactosamine-6-phosphate isomerase family. 6-phosphogluconolactonase subfamily.

The enzyme catalyses 6-phospho-D-glucono-1,5-lactone + H2O = 6-phospho-D-gluconate + H(+). It participates in carbohydrate degradation; pentose phosphate pathway; D-ribulose 5-phosphate from D-glucose 6-phosphate (oxidative stage): step 2/3. Hydrolysis of 6-phosphogluconolactone to 6-phosphogluconate. The polypeptide is Probable 6-phosphogluconolactonase (Schizosaccharomyces pombe (strain 972 / ATCC 24843) (Fission yeast)).